The following is a 462-amino-acid chain: Annexin A7 (462 aa).

The segment at 1–130 (MSYPPNQGYP…QGYPPQQGYP (130 aa)) is disordered. The 19 X 6 AA tandem repeats of Q-G-Y-P-P-Q stretch occupies residues 7–131 (QGYPPQSNSP…GYPPQQGYPP (125 aa)). Positions 16–130 (PQPGQYGAPQ…QGYPPQQGYP (115 aa)) are enriched in low complexity. 4 Annexin repeats span residues 161–232 (HDCK…ALLT), 233–304 (EPAH…KLTE), 315–388 (MQVS…AIVT), and 392–462 (NPYG…DIIS).

This sequence belongs to the annexin family.

Functionally, calcium/phospholipid-binding protein which promotes membrane fusion and is involved in exocytosis. This chain is Annexin A7 (nxnA), found in Dictyostelium discoideum (Social amoeba).